The chain runs to 234 residues: Large ribosomal subunit protein uL1 (234 aa).

Belongs to the universal ribosomal protein uL1 family. Part of the 50S ribosomal subunit.

In terms of biological role, binds directly to 23S rRNA. The L1 stalk is quite mobile in the ribosome, and is involved in E site tRNA release. Its function is as follows. Protein L1 is also a translational repressor protein, it controls the translation of the L11 operon by binding to its mRNA. This chain is Large ribosomal subunit protein uL1, found in Psychromonas ingrahamii (strain DSM 17664 / CCUG 51855 / 37).